Here is a 431-residue protein sequence, read N- to C-terminus: 3-phosphoshikimate 1-carboxyvinyltransferase (431 aa).

Lys-26, Ser-27, and Arg-31 together coordinate 3-phosphoshikimate. Phosphoenolpyruvate is bound at residue Lys-26. Positions 99 and 127 each coordinate phosphoenolpyruvate. 3-phosphoshikimate-binding residues include Ser-170, Ser-171, Gln-172, Ser-199, Glu-314, and His-343. Gln-172 contacts phosphoenolpyruvate. The active-site Proton acceptor is Glu-314. Phosphoenolpyruvate contacts are provided by Arg-347, Arg-388, and Lys-413.

This sequence belongs to the EPSP synthase family. In terms of assembly, monomer.

Its subcellular location is the cytoplasm. The enzyme catalyses 3-phosphoshikimate + phosphoenolpyruvate = 5-O-(1-carboxyvinyl)-3-phosphoshikimate + phosphate. The protein operates within metabolic intermediate biosynthesis; chorismate biosynthesis; chorismate from D-erythrose 4-phosphate and phosphoenolpyruvate: step 6/7. Catalyzes the transfer of the enolpyruvyl moiety of phosphoenolpyruvate (PEP) to the 5-hydroxyl of shikimate-3-phosphate (S3P) to produce enolpyruvyl shikimate-3-phosphate and inorganic phosphate. The protein is 3-phosphoshikimate 1-carboxyvinyltransferase of Mycobacterium marinum (strain ATCC BAA-535 / M).